The chain runs to 31 residues: Cytochrome b6-f complex subunit 6 (31 aa).

Residues 4–24 (ITSYFGFLLAALTITSVLFIG) form a helical membrane-spanning segment.

This sequence belongs to the PetL family. As to quaternary structure, the 4 large subunits of the cytochrome b6-f complex are cytochrome b6, subunit IV (17 kDa polypeptide, PetD), cytochrome f and the Rieske protein, while the 4 small subunits are PetG, PetL, PetM and PetN. The complex functions as a dimer.

The protein resides in the plastid. The protein localises to the chloroplast thylakoid membrane. In terms of biological role, component of the cytochrome b6-f complex, which mediates electron transfer between photosystem II (PSII) and photosystem I (PSI), cyclic electron flow around PSI, and state transitions. PetL is important for photoautotrophic growth as well as for electron transfer efficiency and stability of the cytochrome b6-f complex. In Lepidium virginicum (Virginia pepperweed), this protein is Cytochrome b6-f complex subunit 6.